The following is a 423-amino-acid chain: Lysosomal acid phosphatase (423 aa).

The first 30 residues, 1–30 (MAGRQSGWSQAALLQFLLGMCLMVMPPIQA), serve as a signal peptide directing secretion. Over 31 to 380 (RSLRFVTLLY…QLASDTADTE (350 aa)) the chain is Lumenal. The Nucleophile role is filled by His-42. Residues Asn-92, Asn-133, Asn-167, Asn-177, Asn-191, Asn-197, and Asn-267 are each glycosylated (N-linked (GlcNAc...) asparagine). 3 cysteine pairs are disulfide-bonded: Cys-159/Cys-370, Cys-212/Cys-310, and Cys-345/Cys-349. Asp-287 functions as the Proton donor in the catalytic mechanism. 2 N-linked (GlcNAc...) asparagine glycosylation sites follow: Asn-322 and Asn-331. A helical membrane pass occupies residues 381–401 (VIVALAVCGSILFLLIVLLLT). At 402–423 (VLFRMQAQPPGYHHVADREDHA) the chain is on the cytoplasmic side.

It belongs to the histidine acid phosphatase family. The membrane-bound form is converted to the soluble form by sequential proteolytic processing. First, the C-terminal cytoplasmic tail is removed. Cleavage by a lysosomal protease releases the soluble form in the lysosome lumen.

It localises to the lysosome membrane. The protein localises to the lysosome lumen. It catalyses the reaction a phosphate monoester + H2O = an alcohol + phosphate. This chain is Lysosomal acid phosphatase (Acp2), found in Rattus norvegicus (Rat).